The chain runs to 181 residues: ADP-ribosylation factor 1-like 2 (181 aa).

Gly2 carries N-myristoyl glycine lipidation. An important for the stable binding to the membranes region spans residues 3 to 16 (NVFGSLFKGLFGKR). GTP-binding positions include 24 to 32 (GLDAAGKTT), 126 to 129 (NKQD), and Ala160.

This sequence belongs to the small GTPase superfamily. Arf family. Expressed in hypodermis, intestine, spermatheca, uterus, gonadal sheath, vulva cells, pharynx muscle, body wall muscle, head neurons, ventral nerve cord.

The protein resides in the golgi apparatus membrane. It catalyses the reaction GTP + H2O = GDP + phosphate + H(+). With respect to regulation, alternates between an inactive GDP-bound form and an active GTP-bound form. Activated by a guanine nucleotide-exchange factor (GEF) and inactivated by GTPase-activating protein (GAP). Small GTPase involved in protein trafficking between different compartments. Modulates vesicle budding and uncoating within the Golgi complex. In its GTP-bound form, triggers the recruitment of coatomer proteins to the Golgi membrane. The hydrolysis of ARF1-bound GTP, which is mediated by ARFGAPs proteins, is required for dissociation of coat proteins from Golgi membranes and vesicles. Involved in endoplasmic reticulum dynamics during embryogenesis. Also required for adult germline function. Plays a role in cell shedding during embryogenesis probably by promoting the endocytosis of cell adhesion molecules. During neurogenesis, involved in cell autonomous Q.p neuroblast asymmetric divisions that generate one precursor cell and one apoptotic cell, probably by controlling endocytosis. Plays a role in maintaining mitochondrial morphology. This chain is ADP-ribosylation factor 1-like 2, found in Caenorhabditis elegans.